The following is a 502-amino-acid chain: Probable malate:quinone oxidoreductase 1 (502 aa).

Belongs to the MQO family. It depends on FAD as a cofactor.

It catalyses the reaction (S)-malate + a quinone = a quinol + oxaloacetate. It functions in the pathway carbohydrate metabolism; tricarboxylic acid cycle; oxaloacetate from (S)-malate (quinone route): step 1/1. In Pseudomonas putida (strain ATCC 47054 / DSM 6125 / CFBP 8728 / NCIMB 11950 / KT2440), this protein is Probable malate:quinone oxidoreductase 1.